The following is a 351-amino-acid chain: MESKQLLQKLLAGEHCSKEEMQDCMNSIMDGEFSDSVIAALLALLQKKGVVANELAGAHASLMAHATTVALSTHAVDTCGTGGDHGGTYNISTTASLIACSAGVRVAKHGNRSVTSSCGSADVLEALGFTLELPPEATISLFKKTGFAFLFAPLYHPSMKRVAHIRRELGIRTLFNMLGPLLNPAQVKRQLVGVFSEELSELYADVLLQTGARHALIVHASTEEGVILDEPSLNGTTFVTEIEKGVVRKHTLRPEEFGIAPAPLAALQGGDKEHNARIIQSIADGSASAAQRDAALYSSAMACYVGGKCACLNDGFIVAKEALESGKTQAKLKEIIAYNQALVTEYHVAKS.

5-phospho-alpha-D-ribose 1-diphosphate-binding positions include G80, 83-84, T88, 90-93, 108-116, and S120; these read GD, NIST, and KHGNRSVTS. G80 is an anthranilate binding site. S92 contributes to the Mg(2+) binding site. Residue N111 participates in anthranilate binding. Position 166 (R166) interacts with anthranilate. Mg(2+)-binding residues include D229 and E230.

The protein belongs to the anthranilate phosphoribosyltransferase family. As to quaternary structure, homodimer. The cofactor is Mg(2+).

It catalyses the reaction N-(5-phospho-beta-D-ribosyl)anthranilate + diphosphate = 5-phospho-alpha-D-ribose 1-diphosphate + anthranilate. It participates in amino-acid biosynthesis; L-tryptophan biosynthesis; L-tryptophan from chorismate: step 2/5. Functionally, catalyzes the transfer of the phosphoribosyl group of 5-phosphorylribose-1-pyrophosphate (PRPP) to anthranilate to yield N-(5'-phosphoribosyl)-anthranilate (PRA). This Chlorobium chlorochromatii (strain CaD3) protein is Anthranilate phosphoribosyltransferase.